A 748-amino-acid polypeptide reads, in one-letter code: Structure-specific endonuclease subunit SLX4 (748 aa).

Residues 62–75 are compositionally biased toward polar residues; it reads KSVTAQKSPMTQET. A disordered region spans residues 62-104; that stretch reads KSVTAQKSPMTQETTKNDTERNKDVDKSCNPVSTSHPDLGGSN. Position 72 is a phosphothreonine; by ATR and ATM (threonine 72). Positions 76-88 are enriched in basic and acidic residues; the sequence is TKNDTERNKDVDK. Threonine 113 carries the post-translational modification Phosphothreonine; by ATR and ATM. 2 disordered regions span residues 215–236 and 277–303; these read IKTQNEGNSDKPPRARNNKGEK and EKSSNSLDNQESSQQRLWTASQLPPEL. The span at 222 to 236 shows a compositional bias: basic and acidic residues; sequence NSDKPPRARNNKGEK. The span at 277-298 shows a compositional bias: polar residues; sequence EKSSNSLDNQESSQQRLWTASQ. A Phosphoserine; by ATR and ATM modification is found at serine 289. Position 319 is a phosphothreonine; by ATR and ATM (threonine 319). A phosphoserine; by ATR and ATM mark is found at serine 329 and serine 355. Residues 591–602 show a composition bias toward polar residues; that stretch reads ISTKDSTQNPTT. A disordered region spans residues 591-610; it reads ISTKDSTQNPTTSNDIIDTS.

The protein belongs to the SLX4 family. In terms of assembly, forms a heterodimer with SLX1. Interacts with RAD1; catalytic subunit of the RAD1-RAD10 endonuclease. Interacts with RTT107. In terms of processing, phosphorylated by ATR (MEC1) and ATM (TEL1) upon DNA damage. This appears to be required for the function with the RAD1-RAD10 endonuclease.

Its subcellular location is the nucleus. The protein localises to the cytoplasm. Its function is as follows. Regulatory subunit that interacts with and increases the activity of different structure-specific endonucleases. Has several distinct roles in protecting genome stability by resolving diverse forms of deleterious DNA structures. Component of the SLX1-SLX4 structure-specific endonuclease that resolves DNA secondary structures generated during DNA repair and recombination. Has endonuclease activity towards branched DNA substrates, introducing single-strand cuts in duplex DNA close to junctions with ss-DNA. Has a preference for simple Y, 5'-flap and replication fork-like structures. It cleaves the strand bearing the 5'-non-homologous arm at the branch site junction and generates ligatable, nicked products from the 5'-flap or replication fork substrates. Plays a critical role in maintaining the integrity of the ribosomal DNA (rDNA) loci, where it has a role in re-starting stalled replication forks. Has Holliday junction resolvase activity in vitro. Interacts with the structure-specific RAD1-RAD10 endonuclease and promotes RAD1-RAD10-dependent 3'-non-homologous tail removal (NHTR) during repair of double-strand breaks by single-strand annealing. SLX4 also promotes recovery from DNA-alkylation-induced replisome stalling during DNA replication by facilitating the error-free mode of lesion bypass. This does not require SLX1 or RAD1-RAD10, but probably RTT107. The sequence is that of Structure-specific endonuclease subunit SLX4 from Saccharomyces cerevisiae (strain RM11-1a) (Baker's yeast).